A 278-amino-acid chain; its full sequence is Probable septum site-determining protein MinC (278 aa).

The protein belongs to the MinC family. As to quaternary structure, interacts with MinD and FtsZ.

Its function is as follows. Cell division inhibitor that blocks the formation of polar Z ring septums. Rapidly oscillates between the poles of the cell to destabilize FtsZ filaments that have formed before they mature into polar Z rings. Prevents FtsZ polymerization. In Gloeobacter violaceus (strain ATCC 29082 / PCC 7421), this protein is Probable septum site-determining protein MinC.